We begin with the raw amino-acid sequence, 101 residues long: Small ribosomal subunit protein uS14 (101 aa).

The protein belongs to the universal ribosomal protein uS14 family. In terms of assembly, part of the 30S ribosomal subunit. Contacts proteins S3 and S10.

Functionally, binds 16S rRNA, required for the assembly of 30S particles and may also be responsible for determining the conformation of the 16S rRNA at the A site. The sequence is that of Small ribosomal subunit protein uS14 from Phenylobacterium zucineum (strain HLK1).